The sequence spans 255 residues: Large ribosomal subunit protein uL4 (255 aa).

The protein belongs to the universal ribosomal protein uL4 family. As to quaternary structure, part of the 50S ribosomal subunit.

Functionally, one of the primary rRNA binding proteins, this protein initially binds near the 5'-end of the 23S rRNA. It is important during the early stages of 50S assembly. It makes multiple contacts with different domains of the 23S rRNA in the assembled 50S subunit and ribosome. In terms of biological role, forms part of the polypeptide exit tunnel. The chain is Large ribosomal subunit protein uL4 from Thermoplasma volcanium (strain ATCC 51530 / DSM 4299 / JCM 9571 / NBRC 15438 / GSS1).